The following is a 488-amino-acid chain: Thiamine transporter 2 (488 aa).

Topologically, residues 1 to 8 are cytoplasmic; it reads MDSSCRTP. Residues 9–29 traverse the membrane as a helical segment; it reads PSNSWVYPTVILCLFGFFSMF. The Extracellular portion of the chain corresponds to 30–54; the sequence is RPSEAFLIPFLSEPSKNLTSPEMTN. An N-linked (GlcNAc...) asparagine glycan is attached at Asn-46. The chain crosses the membrane as a helical span at residues 55–75; that stretch reads EILPVWTYSYLATLPPVFVLT. Residues 76–82 lie on the Cytoplasmic side of the membrane; that stretch reads DYLRYKP. A helical membrane pass occupies residues 83-103; the sequence is VIMLHVVAFATSYLFLLFGQG. The Extracellular segment spans residues 104–111; sequence VMLMQTAE. The chain crosses the membrane as a helical span at residues 112–132; the sequence is FFFGVVSATEIAYFAYIYSMV. Residues 133–145 lie on the Cytoplasmic side of the membrane; the sequence is SPEHYQKVSSYCR. The helical transmembrane segment at 146–166 threads the bilayer; it reads SITLVAYTAGSVLAQLLVSLT. The Extracellular portion of the chain corresponds to 167 to 172; sequence NLPYSS. The helical transmembrane segment at 173–193 threads the bilayer; it reads LFYISLACVSVAFFFSLFLPM. Residues 194 to 276 are Cytoplasmic-facing; it reads PKKSMFFHAK…YSSKHLVYWS (83 aa). A helical membrane pass occupies residues 277 to 297; it reads LWWAFATAGYNQILNYVQVLW. The Extracellular segment spans residues 298–310; it reads EHKAPSQDSSIYN. A helical transmembrane segment spans residues 311–331; it reads GAVEAIATFGGALASFSVGYL. The Cytoplasmic portion of the chain corresponds to 332–335; that stretch reads KVNW. A helical membrane pass occupies residues 336 to 356; sequence DLLGELGLAVFSAVIAGSLFL. The Extracellular portion of the chain corresponds to 357 to 369; it reads MNYSRSIWVCYAG. Asn-358 carries an N-linked (GlcNAc...) asparagine glycan. Residues 370–390 traverse the membrane as a helical segment; the sequence is YLLVKSSYSFLITIAVFQIAV. At 391 to 399 the chain is on the cytoplasmic side; it reads NLSLERYAL. The helical transmembrane segment at 400 to 420 threads the bilayer; it reads VFGIDTFIALVIQTIMTMIVV. Topologically, residues 421-428 are extracellular; sequence DQRGLQLP. The chain crosses the membrane as a helical span at residues 429–449; sequence VTTQFLVYGSYFAVIAGVFLM. The Cytoplasmic portion of the chain corresponds to 450 to 488; that stretch reads RSIYILCSAKCRKEVQNLATTRSPNEPHPQEPSNVSTKF. The tract at residues 469 to 488 is disordered; that stretch reads TTRSPNEPHPQEPSNVSTKF.

Belongs to the reduced folate carrier (RFC) transporter (TC 2.A.48) family. In terms of tissue distribution, high expression in kidney, brain, lung and small intestine. Detected in pancreatic acinar cells (at protein level). Also expressed strongly in pancreatic islet cells.

Its subcellular location is the membrane. The catalysed reaction is thiamine(out) + H(+)(in) = thiamine(in) + H(+)(out). Functionally, high-affinity transporter for the intake of thiamine. Unlike the human ortholog, lacks H(+)-dependent pyridoxine transport activity due to an absence of seven critical amino-acids required for pyridoxine transport. The protein is Thiamine transporter 2 (Slc19a3) of Mus musculus (Mouse).